Reading from the N-terminus, the 76-residue chain is Small ribosomal subunit protein bS18 (76 aa).

This sequence belongs to the bacterial ribosomal protein bS18 family. In terms of assembly, part of the 30S ribosomal subunit. Forms a tight heterodimer with protein bS6.

Its function is as follows. Binds as a heterodimer with protein bS6 to the central domain of the 16S rRNA, where it helps stabilize the platform of the 30S subunit. The chain is Small ribosomal subunit protein bS18 from Nitrosomonas europaea (strain ATCC 19718 / CIP 103999 / KCTC 2705 / NBRC 14298).